The chain runs to 209 residues: Ribosomal RNA large subunit methyltransferase E (209 aa).

Residues Gly-63, Trp-65, Asp-83, Asp-99, and Asp-124 each contribute to the S-adenosyl-L-methionine site. Lys-164 functions as the Proton acceptor in the catalytic mechanism.

Belongs to the class I-like SAM-binding methyltransferase superfamily. RNA methyltransferase RlmE family.

The protein localises to the cytoplasm. It catalyses the reaction uridine(2552) in 23S rRNA + S-adenosyl-L-methionine = 2'-O-methyluridine(2552) in 23S rRNA + S-adenosyl-L-homocysteine + H(+). Specifically methylates the uridine in position 2552 of 23S rRNA at the 2'-O position of the ribose in the fully assembled 50S ribosomal subunit. This is Ribosomal RNA large subunit methyltransferase E from Sodalis glossinidius (strain morsitans).